The following is an 846-amino-acid chain: Disrupted in schizophrenia 1 homolog (846 aa).

5 disordered regions span residues 1 to 53 (MQGA…IGFL), 127 to 147 (HSGVHSGNDRRQSERLTGDSG), 231 to 257 (EAEPLHQSPQEMAAEGSGSDRPHGEPR), 277 to 312 (TRSNRQPECGMVSSSDAGFSSQDASPAGGRSDQDGG), and 409 to 436 (LHGAPQRAGSDDPEAPLEGQRRTTAQDS). An interaction with MAP1A region spans residues 1–288 (MQGAGSRGAW…SNRQPECGMV (288 aa)). Composition is skewed to basic and acidic residues over residues 133–143 (GNDRRQSERLT) and 248–257 (GSDRPHGEPR). The segment covering 277 to 300 (TRSNRQPECGMVSSSDAGFSSQDA) has biased composition (polar residues). Residues 289–686 (SSSDAGFSSQ…LERVWKADLE (398 aa)) form an interaction with TRAF3IP1 region. Positions 429–587 (RRTTAQDSLP…LLEAKMLALS (159 aa)) are required for localization to punctate cytoplasmic foci. Residues 435-846 (DSLPGLAVTR…STAGAQEAED (412 aa)) form a necessary and sufficient for interaction with PCNT and localization at the centrosome region. Residues 440 to 489 (LAVTRRDWLMREKEQLQKEIEALRARVSVLEAKEQRLSQELEDQEMLLRW) adopt a coiled-coil conformation. The interaction with ATF4 and ATF5 stretch occupies residues 588 to 846 (GSCFSTAKEL…STAGAQEAED (259 aa)). Positions 721-846 (TAALAVPRTP…STAGAQEAED (126 aa)) are interaction with NDEL1 and PAFAH1B1. The segment at 721 to 846 (TAALAVPRTP…STAGAQEAED (126 aa)) is interaction with PAFAH1B1. Positions 795–828 (GHDEALFQSLQGELQMVKETLQTMFLQLQPAKEA) are interaction with NDEL1.

As to quaternary structure, interacts with NDEL1. Interacts with CCDC88A (via C-terminus); the interaction is direct. Interacts with GSK3B. Interacts with tubulin alpha, ACTN2, ANKHD1, ATF4, ATF5, CEP63, EIF3S3, MAP1A, NDEL1, PAFAH1B1, RANBP9, SPTBN4, SYNE1 and TRAF3IP1. Interaction with microtubules may be mediated in part by TRAF3IP1. Interacts (via C-terminal) with PCNT. Interacts with CHCHD6. Interacts with CCDC141. Interacts with FBXW7, the substrate-recognition component of a SCF (SKP1-CUL1-F-box protein) E3 ubiquitin-protein ligase complex; the interaction targets DISC1 for proteasomal degradation. Interacts with ZNF365. Interacts with ATF4; inhibiting ATF4 transcription factor activity by disrupting ATF4 dimerization and DNA-binding. Interacts with PDE4B. Post-translationally, ubiquitinated. Ubiquitination with 'Lys-48'-linked polyubiquitin chains leads to its proteasomal degradation. In terms of tissue distribution, expressed in brain, heart, kidney, liver and thymus. Within the brain expression is high in the cerebral cortex, hippocampus and olfactory bulb and is also seen at lower levels in the cerebellum (at protein level).

It localises to the cytoplasm. Its subcellular location is the cytoskeleton. It is found in the mitochondrion. The protein resides in the microtubule organizing center. The protein localises to the centrosome. It localises to the postsynaptic density. Involved in the regulation of multiple aspects of embryonic and adult neurogenesis. Required for neural progenitor proliferation in the ventrical/subventrical zone during embryonic brain development and in the adult dentate gyrus of the hippocampus. Participates in the Wnt-mediated neural progenitor proliferation as a positive regulator by modulating GSK3B activity and CTNNB1 abundance. Plays a role as a modulator of the AKT-mTOR signaling pathway controlling the tempo of the process of newborn neurons integration during adult neurogenesis, including neuron positioning, dendritic development and synapse formation. Inhibits the activation of AKT-mTOR signaling upon interaction with CCDC88A. Regulates the migration of early-born granule cell precursors toward the dentate gyrus during the hippocampal development. Inhibits ATF4 transcription factor activity in neurons by disrupting ATF4 dimerization and DNA-binding. Plays a role, together with PCNT, in the microtubule network formation. The chain is Disrupted in schizophrenia 1 homolog from Rattus norvegicus (Rat).